Consider the following 179-residue polypeptide: Large ribosomal subunit protein uL6 (179 aa).

The protein belongs to the universal ribosomal protein uL6 family. As to quaternary structure, part of the 50S ribosomal subunit.

Functionally, this protein binds to the 23S rRNA, and is important in its secondary structure. It is located near the subunit interface in the base of the L7/L12 stalk, and near the tRNA binding site of the peptidyltransferase center. The polypeptide is Large ribosomal subunit protein uL6 (Nocardia farcinica (strain IFM 10152)).